We begin with the raw amino-acid sequence, 291 residues long: ATP synthase subunit a (291 aa).

6 helical membrane passes run 51 to 71 (FSFT…LLLV), 117 to 137 (FFPC…QGMI), 146 to 166 (HFLI…IVGF), 173 to 193 (FLSF…LVLL), 213 to 233 (MMAG…MLCM), and 239 to 259 (FIGD…ELGV).

The protein belongs to the ATPase A chain family. In terms of assembly, F-type ATPases have 2 components, CF(1) - the catalytic core - and CF(0) - the membrane proton channel. CF(1) has five subunits: alpha(3), beta(3), gamma(1), delta(1), epsilon(1). CF(0) has three main subunits: a, b and c.

The protein resides in the mitochondrion inner membrane. Its function is as follows. Mitochondrial membrane ATP synthase (F(1)F(0) ATP synthase or Complex V) produces ATP from ADP in the presence of a proton gradient across the membrane which is generated by electron transport complexes of the respiratory chain. F-type ATPases consist of two structural domains, F(1) - containing the extramembraneous catalytic core and F(0) - containing the membrane proton channel, linked together by a central stalk and a peripheral stalk. During catalysis, ATP synthesis in the catalytic domain of F(1) is coupled via a rotary mechanism of the central stalk subunits to proton translocation. Key component of the proton channel; it may play a direct role in the translocation of protons across the membrane. In Vicia faba (Broad bean), this protein is ATP synthase subunit a (ATP6).